The primary structure comprises 292 residues: uncharacterized protein (292 aa).

A helical transmembrane segment spans residues 175 to 197 (VLNFYFTALPYAIDGIISGIGVF).

The protein localises to the membrane. This is an uncharacterized protein from Methanocaldococcus jannaschii (strain ATCC 43067 / DSM 2661 / JAL-1 / JCM 10045 / NBRC 100440) (Methanococcus jannaschii).